Consider the following 689-residue polypeptide: SH3 domain-binding protein 1 (689 aa).

Basic residues predominate over residues 1 to 11; sequence MMKRQLHRMRQ. The disordered stretch occupies residues 1 to 24; the sequence is MMKRQLHRMRQLAHTGSSGRTPET. The tract at residues 1 to 275 is interaction with CGNL1; the sequence is MMKRQLHRMR…TAAPFSRVYG (275 aa). The BAR domain occupies 17 to 262; sequence SSGRTPETAE…RDNHSQADSS (246 aa). A phosphoserine mark is found at Ser-241 and Ser-262. Residues 276–469 enclose the Rho-GAP domain; it reads VSLRTHLQDL…VLIQNADTLF (194 aa). The segment at 470 to 689 is interaction with CD2AP; it reads PGDINFSVSG…RPRGLISETD (220 aa). The interval 507–689 is disordered; it reads TAATPTPTPA…RPRGLISETD (183 aa). 2 positions are modified to phosphoserine: Ser-539 and Ser-545. The segment covering 565 to 575 has biased composition (pro residues); it reads PARPTMPPPQP. Positions 576 to 594 are enriched in low complexity; sequence SSSRSSPPALSLPAGSVSP. Position 586 is a phosphoserine (Ser-586). A Phosphothreonine modification is found at Thr-596. An SH3-binding motif is present at residues 611 to 620; that stretch reads APTVPPPLPP. The span at 613–625 shows a compositional bias: pro residues; the sequence is TVPPPLPPAPPQP. Ser-641 is modified (phosphoserine). Residues 670–680 are compositionally biased toward pro residues; the sequence is PPTPVLPPQPR.

In terms of assembly, interacts with RAC1. Interacts with the exocyst via EXOC4 and EXOC8; required for the localization of both SH3BP1 and the exocyst to the leading edge of migrating cells. Interacts with CD2AP and CGNL1; probably part of a complex at cell junctions. Interacts with CAPZA1; recruits CAPZA1 to forming cell junctions. May interact with AFDN. Interacts with PLXND1; they dissociate upon SEMA3E binding to PLXND1 allowing SH3BP1 to transduce downstream signal through RAC1 inactivation. Interacts with ABL1, GRB2 and SRC (via SH3 domain).

It localises to the cell projection. The protein localises to the cell junction. Its subcellular location is the tight junction. It is found in the adherens junction. The protein resides in the phagocytic cup. It localises to the nucleus. The protein localises to the cytoplasm. Its subcellular location is the cytosol. GTPase activating protein/GAP which specifically converts GTP-bound Rho-type GTPases including RAC1 and CDC42 in their inactive GDP-bound form. By specifically inactivating RAC1 at the leading edge of migrating cells, it regulates the spatiotemporal organization of cell protrusions which is important for proper cell migration. Also negatively regulates CDC42 in the process of actin remodeling and the formation of epithelial cell junctions. Through its GAP activity toward RAC1 and/or CDC42 plays a specific role in phagocytosis of large particles. Specifically recruited by a PI3 kinase/PI3K-dependent mechanism to sites of large particles engagement, inactivates RAC1 and/or CDC42 allowing the reorganization of the underlying actin cytoskeleton required for engulfment. It also plays a role in angiogenesis and the process of repulsive guidance as part of a semaphorin-plexin signaling pathway. Following the binding of PLXND1 to extracellular SEMA3E it dissociates from PLXND1 and inactivates RAC1, inducing the intracellular reorganization of the actin cytoskeleton and the collapse of cells. This is SH3 domain-binding protein 1 from Rattus norvegicus (Rat).